The primary structure comprises 205 residues: Small ribosomal subunit protein uS4 (205 aa).

Residues 95–158 (SRLDNIVYRM…TKSPLVKNFI (64 aa)) form the S4 RNA-binding domain.

Belongs to the universal ribosomal protein uS4 family. As to quaternary structure, part of the 30S ribosomal subunit. Contacts protein S5. The interaction surface between S4 and S5 is involved in control of translational fidelity.

One of the primary rRNA binding proteins, it binds directly to 16S rRNA where it nucleates assembly of the body of the 30S subunit. In terms of biological role, with S5 and S12 plays an important role in translational accuracy. This chain is Small ribosomal subunit protein uS4, found in Mycoplasma genitalium (strain ATCC 33530 / DSM 19775 / NCTC 10195 / G37) (Mycoplasmoides genitalium).